Consider the following 347-residue polypeptide: Eukaryotic translation initiation factor 3 subunit I (347 aa).

WD repeat units follow at residues Gly-8–Thr-47, Gly-50–Thr-89, Thr-149–Asp-190, Leu-194–Lys-233, and Gly-291–Lys-330. Phosphoserine is present on Ser-302.

It belongs to the eIF-3 subunit I family. In terms of assembly, component of the eukaryotic translation initiation factor 3 (eIF-3) complex.

Its subcellular location is the cytoplasm. Functionally, component of the eukaryotic translation initiation factor 3 (eIF-3) complex, which is involved in protein synthesis of a specialized repertoire of mRNAs and, together with other initiation factors, stimulates binding of mRNA and methionyl-tRNAi to the 40S ribosome. The eIF-3 complex specifically targets and initiates translation of a subset of mRNAs involved in cell proliferation. The protein is Eukaryotic translation initiation factor 3 subunit I of Saccharomyces cerevisiae (strain YJM789) (Baker's yeast).